Reading from the N-terminus, the 688-residue chain is Glycine--tRNA ligase beta subunit (688 aa).

It belongs to the class-II aminoacyl-tRNA synthetase family. In terms of assembly, tetramer of two alpha and two beta subunits.

The protein resides in the cytoplasm. It carries out the reaction tRNA(Gly) + glycine + ATP = glycyl-tRNA(Gly) + AMP + diphosphate. This is Glycine--tRNA ligase beta subunit from Syntrophomonas wolfei subsp. wolfei (strain DSM 2245B / Goettingen).